Consider the following 706-residue polypeptide: ATP-dependent zinc metalloprotease FtsH (706 aa).

Residues 1–17 (MAKNSLKPSNPYNSEPE) show a composition bias toward polar residues. Residues 1–20 (MAKNSLKPSNPYNSEPETPQ) are disordered. The Cytoplasmic portion of the chain corresponds to 1 to 24 (MAKNSLKPSNPYNSEPETPQPRPK). A helical transmembrane segment spans residues 25–45 (LPMIYYVVVIALLIGLQLAFF). The Periplasmic segment spans residues 46 to 142 (WSGSSREIPY…RYEGSPGTTW (97 aa)). The interval 88-111 (GLPKQEEGNDTTRKLLPGAKTPEN) is disordered. A compositionally biased stretch (basic and acidic residues) spans 91–100 (KQEEGNDTTR). The chain crosses the membrane as a helical span at residues 143–163 (ISELIQWVLPFALLFGLYFFI). At 164–706 (FRRMGAGGPG…LRQSRNVSDN (543 aa)) the chain is on the cytoplasmic side. 239–246 (GPPGTGKT) contributes to the ATP binding site. Residue histidine 462 coordinates Zn(2+). The active site involves glutamate 463. Zn(2+) contacts are provided by histidine 466 and aspartate 539. A disordered region spans residues 641–681 (RPGGQEEDSGEVDCSKKSAENGMVAHEPETTADAESTEKVG).

The protein in the central section; belongs to the AAA ATPase family. This sequence in the C-terminal section; belongs to the peptidase M41 family. Homohexamer. The cofactor is Zn(2+).

It is found in the cell inner membrane. In terms of biological role, acts as a processive, ATP-dependent zinc metallopeptidase for both cytoplasmic and membrane proteins. Plays a role in the quality control of integral membrane proteins. This is ATP-dependent zinc metalloprotease FtsH from Chlorobium luteolum (strain DSM 273 / BCRC 81028 / 2530) (Pelodictyon luteolum).